A 306-amino-acid chain; its full sequence is Solute carrier family 25 member 48 (306 aa).

3 Solcar repeats span residues 3 to 86 (SFQL…TQRF), 101 to 200 (RSLS…LSEW), and 209 to 296 (PSPY…SLKA). A run of 6 helical transmembrane segments spans residues 9–29 (FVAG…LDTV), 61–81 (GMSF…GVFS), 107–127 (LLAS…VELI), 184–204 (IPGY…ITPE), 212–232 (YAAW…ATPM), and 272–290 (ITVN…FLGY).

This sequence belongs to the mitochondrial carrier (TC 2.A.29) family.

The protein localises to the mitochondrion inner membrane. This Mus musculus (Mouse) protein is Solute carrier family 25 member 48 (Slc25a48).